The sequence spans 311 residues: tRNA dimethylallyltransferase (311 aa).

12 to 19 is a binding site for ATP; that stretch reads GPTASGKT. Position 14-19 (14-19) interacts with substrate; that stretch reads TASGKT. Interaction with substrate tRNA stretches follow at residues 37-40, 161-165, and 241-246; these read DSAL, QRINR, and RCVGYR.

This sequence belongs to the IPP transferase family. In terms of assembly, monomer. It depends on Mg(2+) as a cofactor.

It catalyses the reaction adenosine(37) in tRNA + dimethylallyl diphosphate = N(6)-dimethylallyladenosine(37) in tRNA + diphosphate. Its function is as follows. Catalyzes the transfer of a dimethylallyl group onto the adenine at position 37 in tRNAs that read codons beginning with uridine, leading to the formation of N6-(dimethylallyl)adenosine (i(6)A). This Histophilus somni (strain 2336) (Haemophilus somnus) protein is tRNA dimethylallyltransferase.